Reading from the N-terminus, the 38-residue chain is Photosystem II reaction center protein L (38 aa).

Residues 17–37 (SLYWGLLLIFVLAVLFSNYSF) form a helical membrane-spanning segment.

It belongs to the PsbL family. In terms of assembly, PSII is composed of 1 copy each of membrane proteins PsbA, PsbB, PsbC, PsbD, PsbE, PsbF, PsbH, PsbI, PsbJ, PsbK, PsbL, PsbM, PsbT, PsbX, PsbY, PsbZ, Psb30/Ycf12, at least 3 peripheral proteins of the oxygen-evolving complex and a large number of cofactors. It forms dimeric complexes.

Its subcellular location is the plastid. The protein localises to the chloroplast thylakoid membrane. One of the components of the core complex of photosystem II (PSII). PSII is a light-driven water:plastoquinone oxidoreductase that uses light energy to abstract electrons from H(2)O, generating O(2) and a proton gradient subsequently used for ATP formation. It consists of a core antenna complex that captures photons, and an electron transfer chain that converts photonic excitation into a charge separation. This subunit is found at the monomer-monomer interface and is required for correct PSII assembly and/or dimerization. The chain is Photosystem II reaction center protein L from Bowenia serrulata (Byfield fern).